The following is a 344-amino-acid chain: GPALPP motifs-containing protein 1 (344 aa).

A disordered region spans residues 1–309 (MARDLIGPAL…QERIPFDRDK (309 aa)). Alanine 2 carries the post-translational modification N-acetylalanine. Residues 7–12 (GPALPP) carry the GPALPP motif 1 motif. Serine 28 carries the post-translational modification Phosphoserine. A GPALPP motif 2 motif is present at residues 30–35 (GPALPP). Acidic residues-rich tracts occupy residues 58–67 (GNQESEEDDT) and 80–93 (DDND…DDDG). A GPALPP motif 3 motif is present at residues 96–101 (GPALPP). The residue at position 109 (serine 109) is a Phosphoserine. The span at 111–120 (PRPIIGPALP) shows a compositional bias: pro residues. The GPALPP motif 4 motif lies at 116–121 (GPALPP). The segment covering 128 to 137 (QKSDKGRDDP) has biased composition (basic and acidic residues). At threonine 142 the chain carries Phosphothreonine. Residues serine 144 and serine 145 each carry the phosphoserine modification. Basic and acidic residues-rich tracts occupy residues 167 to 191 (EFEK…KPIV), 231 to 265 (PADR…KRLA), 273 to 283 (ESKRSESLMDI), and 291 to 309 (KAAE…DRDK). Residue lysine 275 forms a Glycyl lysine isopeptide (Lys-Gly) (interchain with G-Cter in SUMO2) linkage. A Glycyl lysine isopeptide (Lys-Gly) (interchain with G-Cter in SUMO2) cross-link involves residue lysine 312.

In Pongo abelii (Sumatran orangutan), this protein is GPALPP motifs-containing protein 1 (GPALPP1).